Consider the following 159-residue polypeptide: Bacterioferritin (159 aa).

The 145-residue stretch at 1–145 (MQGDPEVLRL…TQLELMDKLG (145 aa)) folds into the Ferritin-like diiron domain. 2 residues coordinate Fe cation: glutamate 18 and glutamate 51. A heme b-binding site is contributed by methionine 52. Fe cation-binding residues include histidine 54, glutamate 94, glutamate 127, and histidine 130.

Belongs to the bacterioferritin family. Homooligomer of 24 subunits, arranged as 12 dimers, that are packed together to form an approximately spherical molecule with a central cavity, in which large amounts of iron can be deposited. It depends on heme b as a cofactor.

It carries out the reaction 4 Fe(2+) + O2 + 4 H(+) = 4 Fe(3+) + 2 H2O. The catalysed reaction is Fe(2+)(in) = Fe(2+)(out). Functionally, iron-storage protein, whose ferroxidase center binds Fe(2+), oxidizes it using dioxygen to Fe(3+), and participates in the subsequent Fe(3+) oxide mineral core formation within the central cavity of the BFR protein shell. The protein is Bacterioferritin (bfr) of Mycolicibacterium paratuberculosis (strain ATCC BAA-968 / K-10) (Mycobacterium paratuberculosis).